The following is a 506-amino-acid chain: Cysteine protease 1 (506 aa).

A disordered region spans residues 1–21 (MTSSRPSGRDSTGWQETVSNT). C226 serves as the catalytic Nucleophile. Residues D399 and H401 contribute to the active site.

The protein belongs to the peptidase C54 family.

Its subcellular location is the cytoplasm. It is found in the nucleus. It localises to the preautophagosomal structure. The catalysed reaction is [protein]-C-terminal L-amino acid-glycyl-phosphatidylethanolamide + H2O = [protein]-C-terminal L-amino acid-glycine + a 1,2-diacyl-sn-glycero-3-phosphoethanolamine. Functionally, cysteine protease that plays a key role in cytoplasm to vacuole transport (Cvt) and autophagy by mediating both proteolytic activation and delipidation of ATG8. Required for selective autophagic degradation of the nucleus (nucleophagy) as well as for mitophagy which contributes to regulate mitochondrial quantity and quality by eliminating the mitochondria to a basal level to fulfill cellular energy requirements and preventing excess ROS production. The protease activity is required for proteolytic activation of ATG8: cleaves the C-terminal amino acid of ATG8 to reveal a C-terminal glycine. ATG8 ubiquitin-like activity requires the exposure of the glycine at the C-terminus for its conjugation to phosphatidylethanolamine (PE) and its insertion to membranes, which is necessary for autophagy. The ATG8-PE conjugate mediates tethering between adjacent membranes and stimulates membrane hemifusion, leading to expansion of the autophagosomal membrane during autophagy. In addition to the protease activity, also catalyzes deconjugation of PE-conjugated forms of ATG8 during macroautophagy: ATG8 delipidation is required to release the protein from membranes, which facilitates multiple events during macroautophagy, and especially for efficient autophagosome biogenesis, the assembly of ATG9-containing tubulovesicular clusters into phagophores/autophagosomes, and for the disassembly of PAS-associated ATG components. ATG8 delipidation by ATG4 also recycles ATG8-PE generated on inappropriate membranes to maintain a reservoir of unlipidated ATG8 that is required for autophagosome formation at the PAS. This Neurospora crassa (strain ATCC 24698 / 74-OR23-1A / CBS 708.71 / DSM 1257 / FGSC 987) protein is Cysteine protease 1 (cpr-1).